The following is a 351-amino-acid chain: MAISDLLNRRVRARPEDDEVYSEASGSDEGSQDGSDAESNGSIHSQEDDSDAEGDGDDTDADSQSEASNSDIEEEPESEHDDGDDFKASLADISFGALAKAQASMREKNRKDKRTPKDDTASSTVDDIRTKLREAREQKLEAAAKSKSKEKKSRSSKHAPMELSSKRAVTRKRTAVELPPAPRSRDPRFDAAVMGHSGVGKHPHGGKAYAFLDEYRASELNDLKEQMRKTKNLQQKEKLKGEIRRMQDKLRSAQNKKREAEVQAEHKKREKQLIREGKKANPYYLKNSELQKQVLERKYGEMGSRERAKALERRRRKMASKERKEMPWERRGAGGDEDGGAPNGGKRRRLE.

3 disordered regions span residues 1–205 (MAIS…HPHG), 248–279 (DKLRSAQNKKREAEVQAEHKKREKQLIREGKK), and 296–351 (ERKY…RRLE). Residues 22–39 (SEASGSDEGSQDGSDAES) show a composition bias toward low complexity. Acidic residues-rich tracts occupy residues 48 to 63 (DDSDAEGDGDDTDADS) and 71 to 84 (DIEEEPESEHDDGD). The segment covering 105–144 (MREKNRKDKRTPKDDTASSTVDDIRTKLREAREQKLEAAA) has biased composition (basic and acidic residues). Coiled coils occupy residues 119–152 (DTASSTVDDIRTKLREAREQKLEAAAKSKSKEKK) and 216–276 (RASE…LIRE). The span at 146 to 157 (SKSKEKKSRSSK) shows a compositional bias: basic residues. 2 stretches are compositionally biased toward basic and acidic residues: residues 296-311 (ERKYGEMGSRERAKAL) and 319-334 (ASKERKEMPWERRGAG).

The protein belongs to the RRP36 family. As to quaternary structure, associates with 90S and pre-40S pre-ribosomal particles.

Its subcellular location is the nucleus. The protein localises to the nucleolus. Functionally, component of the 90S pre-ribosome involved in the maturation of rRNAs. Required for early cleavages of the pre-RNAs in the 40S ribosomal subunit maturation pathway. This chain is rRNA biogenesis protein rrp36 (rrp36), found in Penicillium rubens (strain ATCC 28089 / DSM 1075 / NRRL 1951 / Wisconsin 54-1255) (Penicillium chrysogenum).